Consider the following 410-residue polypeptide: Replication factor C large subunit (410 aa).

Residue 46 to 53 (GDPGTGKT) coordinates ATP.

This sequence belongs to the activator 1 small subunits family. RfcL subfamily. In terms of assembly, heteromultimer composed of small subunits (RfcS) and large subunits (RfcL).

Functionally, part of the RFC clamp loader complex which loads the PCNA sliding clamp onto DNA. This is Replication factor C large subunit from Picrophilus torridus (strain ATCC 700027 / DSM 9790 / JCM 10055 / NBRC 100828 / KAW 2/3).